The chain runs to 282 residues: Aldo-keto reductase BQ2027_MB2996 (282 aa).

Tyr-57 functions as the Proton donor in the catalytic mechanism. The NADPH site is built by Leu-197, Val-235, Arg-237, Ser-238, Ala-239, Arg-243, Ser-246, Asn-247, and Arg-273.

It belongs to the aldo/keto reductase family.

The polypeptide is Aldo-keto reductase BQ2027_MB2996 (Mycobacterium bovis (strain ATCC BAA-935 / AF2122/97)).